The primary structure comprises 197 residues: Holliday junction resolvase RecU (197 aa).

Positions 82, 84, 97, and 116 each coordinate Mg(2+).

Belongs to the RecU family. Mg(2+) serves as cofactor.

The protein resides in the cytoplasm. The catalysed reaction is Endonucleolytic cleavage at a junction such as a reciprocal single-stranded crossover between two homologous DNA duplexes (Holliday junction).. Functionally, endonuclease that resolves Holliday junction intermediates in genetic recombination. Cleaves mobile four-strand junctions by introducing symmetrical nicks in paired strands. Promotes annealing of linear ssDNA with homologous dsDNA. Required for DNA repair, homologous recombination and chromosome segregation. This chain is Holliday junction resolvase RecU, found in Streptococcus mutans serotype c (strain ATCC 700610 / UA159).